We begin with the raw amino-acid sequence, 144 residues long: MSDVSTNLYKSQLLDYYYQRRAESSINKGSRFLISKAVFGTSSLVTKKGDGTYEIGELPKAFELAELTSQFCTINLVPTYSGGIITVRMDLDQSQLQEGKNYPFNTLVVLDNENKPIAIICVQEDSLYVGKTYTAVMAINTTTA.

Its function is as follows. Structural or assembly protein of tail fibers. This chain is Tail fiber protein R (R), found in Enterobacteriaceae (Bacteriophage P1).